A 255-amino-acid chain; its full sequence is Lactose phosphotransferase system repressor (255 aa).

An HTH deoR-type domain is found at 3–58; sequence KKRRLEKILDMLKIDGTITIKEIIDELDISDMTARRDLDALEADGLLTRTHGGAQL. Residues 20–39 constitute a DNA-binding region (H-T-H motif); sequence ITIKEIIDELDISDMTARRD.

In terms of biological role, repressor of the lactose catabolism operon. Galactose-6-phosphate is the inducer. The sequence is that of Lactose phosphotransferase system repressor (lacR) from Lactococcus lactis subsp. lactis (Streptococcus lactis).